Here is an 830-residue protein sequence, read N- to C-terminus: Post-transcriptional regulator MKT1 (830 aa).

Residue Lys4 forms a Glycyl lysine isopeptide (Lys-Gly) (interchain with G-Cter in ubiquitin) linkage. The interaction with PBP1 stretch occupies residues 130–380 (RSRGWTQWNN…SPATTVTKNA (251 aa)). The tract at residues 347–400 (DSEKNNKDGKKSNLSSPSSASSSASPATTVTKNASEKLTYEKSSTKEVRKPRDI) is disordered. Phosphoserine occurs at positions 358, 362, and 371. A compositionally biased stretch (low complexity) spans 361–373 (SSPSSASSSASPA). Residues 380–400 (ASEKLTYEKSSTKEVRKPRDI) are compositionally biased toward basic and acidic residues.

This sequence belongs to the XPG/RAD2 endonuclease family. Interacts (via C-terminus) with PBP1 (via C-terminus).

It localises to the cytoplasm. The protein localises to the cytosol. Its function is as follows. Involved in 3'-UTR mediated RNA regulation. Binds to RNA-binding and RNA regulatory proteins. Complexes with PAB1-binding protein to promote mRNA interactions with poly(A)-binding protein. Promotes mating-type switching in mother cells by positively regulating HO expression. The polypeptide is Post-transcriptional regulator MKT1 (MKT1) (Saccharomyces cerevisiae (strain ATCC 204508 / S288c) (Baker's yeast)).